The following is a 248-amino-acid chain: Deoxyribose-phosphate aldolase (248 aa).

Catalysis depends on Asp117, which acts as the Proton donor/acceptor. Lys179 acts as the Schiff-base intermediate with acetaldehyde in catalysis. The active-site Proton donor/acceptor is Lys208.

This sequence belongs to the DeoC/FbaB aldolase family. DeoC type 1 subfamily.

The protein localises to the cytoplasm. The enzyme catalyses 2-deoxy-D-ribose 5-phosphate = D-glyceraldehyde 3-phosphate + acetaldehyde. It participates in carbohydrate degradation; 2-deoxy-D-ribose 1-phosphate degradation; D-glyceraldehyde 3-phosphate and acetaldehyde from 2-deoxy-alpha-D-ribose 1-phosphate: step 2/2. Catalyzes a reversible aldol reaction between acetaldehyde and D-glyceraldehyde 3-phosphate to generate 2-deoxy-D-ribose 5-phosphate. The chain is Deoxyribose-phosphate aldolase from Thermotoga sp. (strain RQ2).